The following is a 195-amino-acid chain: Large ribosomal subunit protein bL17 (195 aa).

The segment at 132 to 195 is disordered; that stretch reads ARGTRFAARK…TEAKDTKPES (64 aa). Residues 159–186 show a composition bias toward low complexity; that stretch reads PTAAAVAAEAQAEQPTAEAVAADDAATT.

Belongs to the bacterial ribosomal protein bL17 family. As to quaternary structure, part of the 50S ribosomal subunit. Contacts protein L32.

The polypeptide is Large ribosomal subunit protein bL17 (Parafrankia sp. (strain EAN1pec)).